The chain runs to 94 residues: Small ribosomal subunit protein uS19 (94 aa).

Belongs to the universal ribosomal protein uS19 family.

Its function is as follows. Protein S19 forms a complex with S13 that binds strongly to the 16S ribosomal RNA. This chain is Small ribosomal subunit protein uS19, found in Acetivibrio thermocellus (strain ATCC 27405 / DSM 1237 / JCM 9322 / NBRC 103400 / NCIMB 10682 / NRRL B-4536 / VPI 7372) (Clostridium thermocellum).